The sequence spans 913 residues: Auxilin (913 aa).

M1 carries the post-translational modification N-acetylmethionine. Repeat copies occupy residues 36–39, 40–43, and 44–47. Residues 36–47 are 3 X 4 AA approximate tandem repeats; that stretch reads NLKDNLKDTLKD. Residues 55–222 form the Phosphatase tensin-type domain; it reads SVTSYTKGDL…GYMCDLLADK (168 aa). Phosphoserine is present on S112. C164 (phosphocysteine intermediate) is an active-site residue. Residues 228-366 enclose the C2 tensin-type domain; that stretch reads FKPLTIKSIT…FQVTLDVELQ (139 aa). An SH3-binding motif is present at residues 409 to 417; that stretch reads PIDIPPDNP. The tract at residues 451 to 776 is disordered; sequence QESEQSDDEL…GKGSSNLEGK (326 aa). Phosphoserine is present on residues S453 and S456. Residues 506 to 523 show a composition bias toward polar residues; it reads AMSNSFSPPAAPPTNSEL. Low complexity predominate over residues 554–572; it reads ASTQSTPRRSATSTSASPT. 2 positions are modified to phosphoserine: S563 and S570. The segment covering 599 to 629 has biased composition (polar residues); sequence FLNTSSASSDPFLQPTRSPSPTVHASSTPAV. Residues 654–669 are compositionally biased toward low complexity; the sequence is SAATSPTGSSHGTPTH. One can recognise a J domain in the interval 849 to 913; sequence TKWKPVGMAD…FENQGQKPLY (65 aa).

Forms a complex composed of HSPA8, CLTC and DNAJC6. Interacts with HSPA8/HSC70 in an ATP-dependent manner; this interaction stimulates the HSPA8's ATPase activity. Interacts with CLTC; this interaction produces a local change in heavy-chain contacts, creating a detectable global distortion of the clathrin coat. Interacts with AP2A2. Interacts with DNM1(GTP-bound form); this interaction allows clathrin-coated vesicle (CCV) formation at the plasma membrane. Post-translationally, phosphorylation at Ser-570 modulates its ability to bind CLTC and therefore the synaptic vesicle endocytosis (SVE). In terms of processing, the N-terminus is blocked. Expressed in various brain regions, including cerebellum, corpus callosum, cortex, striatum, brainstem, pons, putamen, spinal cord and substantia nigra. Very low expression in non-neural tissues such as leukocytes, liver, adipose tissue, skeletal muscle and bone marrow.

It is found in the cytoplasmic vesicle. The protein resides in the clathrin-coated vesicle. May act as a protein phosphatase and/or a lipid phosphatase. Co-chaperone that recruits HSPA8/HSC70 to clathrin-coated vesicles (CCVs) and promotes the ATP-dependent dissociation of clathrin from CCVs and participates in clathrin-mediated endocytosis of synaptic vesicles and their recycling and also in intracellular trafficking. Firstly, binds tightly to the clathrin cages, at a ratio of one DNAJC6 per clathrin triskelion. The HSPA8:ATP complex then binds to the clathrin-auxilin cage, initially at a ratio of one HSPA8 per triskelion leading to ATP hydrolysis stimulation and causing a conformational change in the HSPA8. This cycle is repeated three times to drive to a complex containing the clathrin-auxilin cage associated to three HSPA8:ADP complex. The ATP hydrolysis of the third HSPA8:ATP complex leads to a concerted dismantling of the cage into component triskelia. Then, dissociates from the released triskelia and be recycled to initiate another cycle of HSPA8's recruitment. Also acts during the early steps of clathrin-coated vesicle (CCV) formation through its interaction with the GTP bound form of DNM1. This Homo sapiens (Human) protein is Auxilin.